Here is a 325-residue protein sequence, read N- to C-terminus: Zinc-type alcohol dehydrogenase-like protein C337.11 (325 aa).

This sequence belongs to the zinc-containing alcohol dehydrogenase family. Quinone oxidoreductase subfamily.

The protein localises to the cytoplasm. Its subcellular location is the nucleus. This Schizosaccharomyces pombe (strain 972 / ATCC 24843) (Fission yeast) protein is Zinc-type alcohol dehydrogenase-like protein C337.11.